The primary structure comprises 632 residues: MIKDPLGAVKSTFAEEVNRVLRDLGSATRFSPIQVSRVRKDYASYGLPVGFKVAKDLNLDPERAAKTVLDRIDMSRIAYSSDAYAESGYLNLRIDKARFFRDILKLASSEELGRGERKGVVGMVEHTSANPVHPLHVGSGRNAVIGDSFSRILNFLGWDVRRHYLVNDCNLQVAILAAGRSKVRDLIPKGKVDHWFGLIYAISNAFLEIWRIKNGFNSESKIEEWSEVVERIGRMEPELLRIGELSEEEVMSLLREYQRKEGGSVQMFREITESVLRGFVETLERMGITYDSFDRESELIWDGWVDRAIEKLESSGYLKREGKAAYVDLWEAAKGDENVRKVFELSEDDISKLEREGKLGEVIPRKFYLTRSDGTWLYTGTDVAYSLYKFDGLGVSFCYNVIASEQNMEQKGVRACLALMGHDPGKLIHLSYEMVNLVGAAMSGRRGLYITLDEVLDEAKRRVEAILKERGIYDEEICEKVAIGALKYGLISVSPNKVVQFRWERVLNLEENSGPFIQYAYTRALNIIKKAQGVPEDFDPNELKSDAEITIVQMISEFPERVWSAFNLMRPDIIASYANELASQFNKFYEDHPVLSAARPEERAARLNLVNAVKGTLGLAMDLIGIPRLERM.

The short motif at 129–139 (ANPVHPLHVGS) is the 'HIGH' region element.

The protein belongs to the class-I aminoacyl-tRNA synthetase family.

Its subcellular location is the cytoplasm. The catalysed reaction is tRNA(Arg) + L-arginine + ATP = L-arginyl-tRNA(Arg) + AMP + diphosphate. The protein is Arginine--tRNA ligase of Korarchaeum cryptofilum (strain OPF8).